A 71-amino-acid polypeptide reads, in one-letter code: Natterin-P (71 aa).

The N-terminal stretch at 1 to 18 (MKLLVLLVTLLVLSWTSA) is a signal peptide. A propeptide spanning residues 19-45 (EDLGDQEILENNEDNNHESELGEPAAQ) is cleaved from the precursor. Residues 22–31 (GDQEILENNE) are compositionally biased toward acidic residues. Residues 22-54 (GDQEILENNEDNNHESELGEPAAQHTDDETSQL) are disordered. Cysteines 62 and 71 form a disulfide.

This sequence belongs to the natterin family. Expressed by the venom gland.

It localises to the secreted. Inhibited by tissue-kallikrein inhibitor TKI and trasylol. Plasma kallikrein inhibitor PKSI527 and classical inhibitors of serine-, metallo-, thiol- or aspartate-peptidases evokes a minor inhibition of the peptide digestion. Functionally, shows nociceptive, edema-inducing and kininogenase activity with release of kallidin from low molecular weight kininogen. The cleavage occurs at Met-Lys bonds. This Thalassophryne nattereri (Copper Joe toadfish) protein is Natterin-P.